A 628-amino-acid polypeptide reads, in one-letter code: Phomenoic acid biosynthesis cluster MFS-type transporter (628 aa).

14 helical membrane-spanning segments follow: residues 102-122 (IHGF…FLYA), 150-170 (VGFV…YGIL), 174-194 (WLYI…GAAP), 204-224 (VFAG…LSIN), 232-252 (AYLS…PVIG), 262-282 (WAFY…FFLL), 302-322 (FVGA…INFG), 329-349 (NSGT…AFAV), 375-395 (MLLF…IYFI), 407-427 (ALDS…TILV), 435-455 (FGYY…ANVF), 488-508 (GFEA…YAVI), 524-544 (IMIA…AVFI), and 595-615 (AKAF…SLGF).

The protein belongs to the major facilitator superfamily. TCR/Tet family.

It is found in the cell membrane. MFS-type transporter; part of the gene cluster that mediates the biosynthesis of phomenoic acid, a long chain aliphatic carboxylic acid that does not appear to be essential for pathogenicity but may play a role in allowing to outcompete other fungi in the environmental niche via its antifungal properties. Is probably involved in the efflux of phomenoic acid. In Leptosphaeria maculans (strain JN3 / isolate v23.1.3 / race Av1-4-5-6-7-8) (Blackleg fungus), this protein is Phomenoic acid biosynthesis cluster MFS-type transporter.